The chain runs to 519 residues: Baeyer-Villiger monooxygenase (519 aa).

Residues Glu-41, 49-52 (TWRD), Asp-61, Tyr-67, and Val-110 contribute to the FAD site. 59-61 (ACD) contacts NADP(+). Residues 183 to 189 (TGASAIQ), 206 to 207 (RT), and 292 to 293 (KR) contribute to the NADP(+) site. Residue Met-399 coordinates FAD. Residues 499–519 (GAKAAEADTGADTGADAEVSA) are disordered.

The protein belongs to the FAD-binding monooxygenase family. The cofactor is FAD.

Functionally, catalyzes a Baeyer-Villiger oxidation reaction, i.e. the insertion of an oxygen atom into a carbon-carbon bond adjacent to a carbonyl, which converts ketones to esters or lactones using NADPH and/or NADH as an electron donor. Thus, can convert bicyclo[3.2.0]hept-2-en-6-one into the oxidative lactone products 2-oxabicyclo[3.3.0]oct-6-en-3-one and 3-oxabicyclo[3.3.0]oct-6-en-2-one. Is also able to catalyze the sulfoxidation of methyl phenyl sulfide (thioanisole). The chain is Baeyer-Villiger monooxygenase from Streptomyces coelicolor (strain ATCC BAA-471 / A3(2) / M145).